Consider the following 184-residue polypeptide: Ribosome-recycling factor (184 aa).

This sequence belongs to the RRF family.

Its subcellular location is the cytoplasm. In terms of biological role, responsible for the release of ribosomes from messenger RNA at the termination of protein biosynthesis. May increase the efficiency of translation by recycling ribosomes from one round of translation to another. The polypeptide is Ribosome-recycling factor (Lachnoclostridium phytofermentans (strain ATCC 700394 / DSM 18823 / ISDg) (Clostridium phytofermentans)).